Reading from the N-terminus, the 700-residue chain is Elongation factor G (700 aa).

The tr-type G domain occupies 8-290; the sequence is ERYRNIGISA…AVIDYLPSPV (283 aa). GTP-binding positions include 17–24, 88–92, and 142–145; these read AHIDAGKT, DTPGH, and NKMD.

The protein belongs to the TRAFAC class translation factor GTPase superfamily. Classic translation factor GTPase family. EF-G/EF-2 subfamily.

It localises to the cytoplasm. Catalyzes the GTP-dependent ribosomal translocation step during translation elongation. During this step, the ribosome changes from the pre-translocational (PRE) to the post-translocational (POST) state as the newly formed A-site-bound peptidyl-tRNA and P-site-bound deacylated tRNA move to the P and E sites, respectively. Catalyzes the coordinated movement of the two tRNA molecules, the mRNA and conformational changes in the ribosome. This Paracidovorax citrulli (strain AAC00-1) (Acidovorax citrulli) protein is Elongation factor G.